Consider the following 468-residue polypeptide: Protein ABHD15 (468 aa).

The first 23 residues, 1 to 23 (MPPWGAALALILAVLALLGLLGP), serve as a signal peptide directing secretion. The interval 33–61 (VGERTLPGAQDRDDGEEADGGGPADQFSD) is disordered. Active-site charge relay system residues include Asp360 and His391. A Phosphoserine modification is found at Ser434.

The protein belongs to the AB hydrolase superfamily. AB hydrolase 4 family. As to quaternary structure, interacts with PDE3B; this interaction regulates PDE3B's stability and expression and, thereby, impacts the antilipolytic action of insulin.

It localises to the secreted. Functionally, may regulate adipocyte lipolysis and liver lipid accumulation. The chain is Protein ABHD15 from Homo sapiens (Human).